The chain runs to 131 residues: Translation initiation factor 5A (131 aa).

A Hypusine modification is found at lysine 37.

This sequence belongs to the eIF-5A family.

Its subcellular location is the cytoplasm. Its function is as follows. Functions by promoting the formation of the first peptide bond. This chain is Translation initiation factor 5A, found in Methanococcus maripaludis (strain DSM 14266 / JCM 13030 / NBRC 101832 / S2 / LL).